We begin with the raw amino-acid sequence, 694 residues long: Elongation factor G (694 aa).

Residues 8–287 form the tr-type G domain; it reads EDYRNFGIMA…AVVSYLPSPI (280 aa). GTP-binding positions include 17–24, 86–90, and 140–143; these read AHIDAGKT, DTPGH, and NKMD.

It belongs to the TRAFAC class translation factor GTPase superfamily. Classic translation factor GTPase family. EF-G/EF-2 subfamily.

It localises to the cytoplasm. Its function is as follows. Catalyzes the GTP-dependent ribosomal translocation step during translation elongation. During this step, the ribosome changes from the pre-translocational (PRE) to the post-translocational (POST) state as the newly formed A-site-bound peptidyl-tRNA and P-site-bound deacylated tRNA move to the P and E sites, respectively. Catalyzes the coordinated movement of the two tRNA molecules, the mRNA and conformational changes in the ribosome. This is Elongation factor G from Bartonella tribocorum (strain CIP 105476 / IBS 506).